The sequence spans 347 residues: Anthranilate phosphoribosyltransferase (347 aa).

Residues G88, 91-92 (GD), T96, 98-101 (NIST), 116-124 (KHGNRSVSS), and S128 contribute to the 5-phospho-alpha-D-ribose 1-diphosphate site. G88 provides a ligand contact to anthranilate. S100 contacts Mg(2+). N119 contributes to the anthranilate binding site. R174 is a binding site for anthranilate. 2 residues coordinate Mg(2+): D232 and E233.

Belongs to the anthranilate phosphoribosyltransferase family. As to quaternary structure, homodimer. Requires Mg(2+) as cofactor.

The enzyme catalyses N-(5-phospho-beta-D-ribosyl)anthranilate + diphosphate = 5-phospho-alpha-D-ribose 1-diphosphate + anthranilate. Its pathway is amino-acid biosynthesis; L-tryptophan biosynthesis; L-tryptophan from chorismate: step 2/5. Functionally, catalyzes the transfer of the phosphoribosyl group of 5-phosphorylribose-1-pyrophosphate (PRPP) to anthranilate to yield N-(5'-phosphoribosyl)-anthranilate (PRA). The sequence is that of Anthranilate phosphoribosyltransferase from Shewanella sp. (strain MR-4).